The primary structure comprises 295 residues: MHANTLLNVESTVLDFWRLLKPRIMYLVVFTAVAGMVAAPGSIHPFLALISLICIALGSGSAGAINMWYDRDIDLLMKRTKARPIPSGRVSAESALEFGVTIGVLSVFIMAIAVNYISAILLAIGILFYIFIYTIWLKRRTPQNIVIGGASGAFPPVIGWAVVTDSVSWRGFVLFLIIFMWTPPHFWALSLNKSEDYEKASVPMFNVVYGPEKTRKYILVYSVLLVLTSLLPALFLKRAPFYLGMAIFGGCIFIWHAVSIMKLKDHSSQKRMFSYSISYLFFLFASIILCSIDLF.

Helical transmembrane passes span 24–43, 47–69, 94–114, 117–137, 144–164, 171–191, 216–236, 241–261, and 272–292; these read IMYL…PGSI, LALI…NMWY, SALE…AIAV, ISAI…TIWL, NIVI…AVVT, GFVL…ALSL, KYIL…ALFL, FYLG…VSIM, and MFSY…LCSI.

The protein belongs to the UbiA prenyltransferase family. Protoheme IX farnesyltransferase subfamily.

The protein resides in the cell membrane. The enzyme catalyses heme b + (2E,6E)-farnesyl diphosphate + H2O = Fe(II)-heme o + diphosphate. It participates in porphyrin-containing compound metabolism; heme O biosynthesis; heme O from protoheme: step 1/1. Its function is as follows. Converts heme B (protoheme IX) to heme O by substitution of the vinyl group on carbon 2 of heme B porphyrin ring with a hydroxyethyl farnesyl side group. This chain is Protoheme IX farnesyltransferase, found in Wolbachia sp. subsp. Brugia malayi (strain TRS).